A 184-amino-acid polypeptide reads, in one-letter code: dITP/XTP pyrophosphatase (184 aa).

Position 8-13 (8-13 (TGNKGK)) interacts with substrate. Mg(2+) is bound by residues Glu37 and Asp66. Asp66 functions as the Proton acceptor in the catalytic mechanism. Substrate-binding positions include Ser67, 142-145 (FGYD), Lys163, and 168-169 (HR).

It belongs to the HAM1 NTPase family. Homodimer. The cofactor is Mg(2+).

The enzyme catalyses XTP + H2O = XMP + diphosphate + H(+). The catalysed reaction is dITP + H2O = dIMP + diphosphate + H(+). It carries out the reaction ITP + H2O = IMP + diphosphate + H(+). In terms of biological role, pyrophosphatase that catalyzes the hydrolysis of nucleoside triphosphates to their monophosphate derivatives, with a high preference for the non-canonical purine nucleotides XTP (xanthosine triphosphate), dITP (deoxyinosine triphosphate) and ITP. Seems to function as a house-cleaning enzyme that removes non-canonical purine nucleotides from the nucleotide pool, thus preventing their incorporation into DNA/RNA and avoiding chromosomal lesions. This is dITP/XTP pyrophosphatase from Methanosarcina mazei (strain ATCC BAA-159 / DSM 3647 / Goe1 / Go1 / JCM 11833 / OCM 88) (Methanosarcina frisia).